The following is a 3898-amino-acid chain: Genome polyprotein (3898 aa).

One can recognise a Peptidase C53 domain in the interval 1 to 168 (MELNHFELLY…TNCPLWVTSC (168 aa)). Active-site for N-terminal protease activity residues include Glu-22, His-49, and Cys-69. The disordered stretch occupies residues 32-54 (LFGNPSEVHPQSTLKLPHDRGRG). The segment at 112 to 138 (CEVTKRIGRVTGSDGKLYHIYVCVDGC) is zinc-binding TRASH domain. Asn-157 is a glycosylation site (N-linked (GlcNAc...) asparagine; by host). Disordered regions lie at residues 170 to 206 (DDGASGSKDKKPDRMNKGKLKIAPREHEKDSKTKPPD) and 221 to 242 (KGKVKGKNTQDGLYHNKNKPPE). Basic and acidic residues-rich tracts occupy residues 176 to 185 (SKDKKPDRMN) and 192 to 204 (APREHEKDSKTKP). Residues Asn-269, Asn-274, Asn-278, Asn-293, and Asn-332 are each glycosylated (N-linked (GlcNAc...) asparagine; by host). Cystine bridges form between Cys-305/Cys-349 and Cys-335/Cys-336. Residues Asn-362 and Asn-367 are each glycosylated (N-linked (GlcNAc...) asparagine; by host). 2 disulfide bridges follow: Cys-377–Cys-422 and Cys-381–Cys-405. N-linked (GlcNAc...) asparagine; by host glycosylation is found at Asn-410, Asn-425, Asn-500, and Asn-594. Cys-693 and Cys-737 are disulfide-bonded. Asn-805, Asn-810, Asn-874, Asn-918, Asn-949, and Asn-986 each carry an N-linked (GlcNAc...) asparagine; by host glycan. The next 9 membrane-spanning stretches (helical) occupy residues 1031–1051 (FVVLVVVALLGGRYVLWLIVT), 1070–1090 (VVLIGNLITHTDNEVVVYFLL), 1104–1124 (ILLLFHAMTNNPVKTITVALL), 1140–1164 (QRQPVTSFDIQLALAVVVVVVMLLA), 1189–1209 (FSTDLVIATVSAALLTWTYIS), 1217–1237 (WLQYLVSTVTGIFLIRVLKGI), 1247–1267 (LPSHRPLFYILVYLISTAVVT), 1281–1301 (VPTLLMVFTMWADILTLILIL), and 1360–1380 (TMLPLIKAILISCISNKWQLI). The Peptidase C74 domain maps to 1441 to 1589 (KELIIKHKVR…DLEHLGWVLR (149 aa)). Active-site for cysteine protease NS2 activity residues include His-1447, Glu-1461, and Cys-1512. A helical membrane pass occupies residues 1568–1588 (MLLVGNLGTEIGDLEHLGWVL). The region spanning 1590-1763 (GPAVCKKVTE…LPIFEASSGR (174 aa)) is the Peptidase S31 domain. Active-site charge relay system; for serine protease NS3 activity residues include His-1658 and Asp-1695. A glycan (N-linked (GlcNAc...) asparagine; by host) is linked at Asn-1713. Ser-1752 (charge relay system; for serine protease NS3 activity) is an active-site residue. The region spanning 1802–1960 (ITTMNRGEFR…QKHPIEEFIA (159 aa)) is the Helicase ATP-binding domain. Residue 1815–1822 (LATGAGKT) coordinates ATP. The DEAH box motif lies at 1910-1913 (DEYH). The 202-residue stretch at 1978–2179 (GLKIPVEEMK…ELPMAVKNIM (202 aa)) folds into the Helicase C-terminal domain. 8 N-linked (GlcNAc...) asparagine; by host glycosylation sites follow: Asn-2134, Asn-2217, Asn-2494, Asn-2787, Asn-2815, Asn-2891, Asn-3211, and Asn-3316. Positions 3500 and 3502 each coordinate GTP. One can recognise a RdRp catalytic domain in the interval 3519 to 3642 (PVAVSFDTKA…ITERALGEKF (124 aa)). Residue Asn-3689 is glycosylated (N-linked (GlcNAc...) asparagine; by host). Arg-3697 is a GTP binding site. N-linked (GlcNAc...) asparagine; by host glycosylation is present at Asn-3698. Lys-3705 is a binding site for GTP. Asn-3794 is a glycosylation site (N-linked (GlcNAc...) asparagine; by host).

It belongs to the pestivirus polyprotein family. Interacts (via N-terminus) with host SP1; this interaction induces proteasomal degradation of SP1 with subsequent down-regulation of HDAC1 and ISG15 expression thereby counteracting the host innate immunity. Interacts (via C-terminus) with host IRF3. In terms of assembly, interacts with host OS9. As to quaternary structure, homodimer; disulfide-linked. Interacts with host RPSA. Homodimer; disulfide-linked. Heterodimer with E1; disulfide-linked. In terms of assembly, homodimer; disulfide-linked. Heterodimer with E1; disulfide-linked. Interacts with host TRX2. Interacts with host receptor ADAM17 (via metalloproteinase domain); this interaction allows binding and probably entry of the virus into the host cell. Interacts with host ANXA2; this interaction allows binding and probably entry of the virus into the host cell. Interacts with host MERTK; this interaction allows binding and probably entry of the virus into the host cell. As to quaternary structure, interacts with host TRAF6; this interaction inhibits host NF-kappa-B pathway. Interacts with NS5B; this interaction enhances RNA-dependent RNA polymerase activity. Interacts with protein NS4A. Interacts with host RAB5, this interaction facilitates the formation of NS4B-related complex. Interacts with host FTH1; this interaction plays a positive role in viral anti-apoptosis. In terms of assembly, interacts with RNA-directed RNA polymerase. Interacts with host RSAD2; this interaction inhibits viral replication. As to quaternary structure, interacts with NS5A; this interaction promotes viral replication. Post-translationally, heavily glycosylated. The viral RNA of pestiviruses is expressed as a single polyprotein which undergoes post-translational proteolytic processing resulting in the production of at least eleven individual proteins. The N-terminal protease cleaves itself from the nascent polyprotein autocatalytically and thereby generates the N-terminus of the adjacent viral capsid protein C. In terms of processing, cleavage between E2 and p7 is partial.

Its subcellular location is the host cytoplasm. The protein localises to the virion. It localises to the host cell membrane. The protein resides in the virion membrane. It is found in the host cell surface. Its subcellular location is the host membrane. The catalysed reaction is Leu is conserved at position P1 for all four cleavage sites. Alanine is found at position P1' of the NS4A-NS4B cleavage site, whereas serine is found at position P1' of the NS3-NS4A, NS4B-NS5A and NS5A-NS5B cleavage sites.. It catalyses the reaction RNA(n) + a ribonucleoside 5'-triphosphate = RNA(n+1) + diphosphate. It carries out the reaction a ribonucleoside 5'-triphosphate + H2O = a ribonucleoside 5'-diphosphate + phosphate + H(+). The enzyme catalyses ATP + H2O = ADP + phosphate + H(+). Leader cysteine autoprotease that cleaves itself from the nascent polyprotein during translation of the viral mRNA. Once released, plays a role in the inhibition of host innate immune response by interacting with host IRF3 and inducing its proteasomal degradation. Functionally, packages viral RNA to form a viral nucleocapsid and thereby protects viral RNA. Also plays a role in transcription regulation. Protects the incoming virus against IFN-induced effectors. In terms of biological role, plays a role in viral entry. Interacts with host RPSA that acts as a cellular attachment receptor for the virus. Also possesses intrinsic ribonuclease (RNase) activity that can inhibit the production of type I interferon and assist in the development of persistent infections. Cleaves preferentially NpU bonds. Binds to heparan sulfate on the host cells for entry. Its function is as follows. Plays a role in cell attachment and subsequent fusion of viral and cellular membranes. Therefore, mediates together with envelope glycoprotein E2 the viral entry. Plays a role in cell attachment and subsequent fusion of viral and cellular membranes. Therefore, mediates together with envelope glycoprotein E1 the viral entry. Binds to host ADAM17 receptor for entry. Binds to host ANXA2 for entry. Binds to host MERTK for entry. Functionally, plays an essential role in the virus replication cycle by acting as a viroporin. Forms ion conductive pores, which alters the cell permeability allowing the transport of ions and other small molecules. In terms of biological role, autoprotease that associates with the host chaperone JIV and cleaves the NS2-3 protein between NS2 and NS3. Also plays a role in the formation of infectious particles. Its function is as follows. Plays a role in the regulation of viral RNA replication. Multifunctional protein that contains an N-terminal protease and a C-terminal helicase, playing essential roles in viral polyprotein processing and viral genome replication. The chymotrypsin-like serine protease activity utilizes NS4A as an essential cofactor and catalyzes the cleavage of the polyprotein leading to the release of NS4A, NS4B, NS5A, and NS5B. Plays a role in the inhibition of host NF-kappa-B activation by interacting with and inhibiting host TRAF6. Interacts with NS5B to enhance RNA-dependent RNA polymerase activity. Functionally, acts as a cofactor for the NS3 protease activity. In terms of biological role, induces a specific membrane alteration that serves as a scaffold for the virus replication complex. Antagonizes host cell apoptosis by interacting with host ferritin heavy chain. The ORF4 protein physically binds host FTH1/FHC, resulting in the reduction of FTH1 protein levels in host cells. Reduction of FTH1 concentration further inhibits the accumulation of reactive oxygen in host cells, leading to reduced apoptosis. Its function is as follows. Regulates viral RNA replication by interacting with the 3'-untranslated region of viral RNA in a dose-dependent manner. At small concentrations promotes viral synthesis by interacting with the polymerase NS5B while at large concentrations, inhibits replication. Replicates the viral (+) and (-) genome. The chain is Genome polyprotein from Classical swine fever virus (strain Alfort/Tuebingen) (CSFV).